A 582-amino-acid chain; its full sequence is 5-aminolevulinate synthase, erythroid-specific, mitochondrial (582 aa).

Position 158 (Arg-158) interacts with succinyl-CoA. 2 residues coordinate pyridoxal 5'-phosphate: Cys-253 and Phe-254. Succinyl-CoA contacts are provided by Ser-275 and Arg-294. Residues Ser-327, His-355, and Thr-383 each contribute to the pyridoxal 5'-phosphate site. The active site involves Lys-386. Residue Lys-386 is modified to N6-(pyridoxal phosphate)lysine. Residues Thr-415 and Thr-416 each coordinate pyridoxal 5'-phosphate. Position 503 (Thr-503) interacts with succinyl-CoA.

Belongs to the class-II pyridoxal-phosphate-dependent aminotransferase family. In terms of assembly, homodimer. Requires pyridoxal 5'-phosphate as cofactor.

It is found in the mitochondrion inner membrane. The enzyme catalyses succinyl-CoA + glycine + H(+) = 5-aminolevulinate + CO2 + CoA. The protein operates within porphyrin-containing compound metabolism; protoporphyrin-IX biosynthesis; 5-aminolevulinate from glycine: step 1/1. Functionally, catalyzes the pyridoxal 5'-phosphate (PLP)-dependent condensation of succinyl-CoA and glycine to form aminolevulinic acid (ALA), with CoA and CO2 as by-products. Contributes significantly to heme formation during erythropoiesis. The sequence is that of 5-aminolevulinate synthase, erythroid-specific, mitochondrial (alas2) from Opsanus tau (Oyster toadfish).